Here is a 243-residue protein sequence, read N- to C-terminus: Homeobox protein nob-1 (243 aa).

Positions 1 to 12 are enriched in polar residues; it reads MISVMQQMINND. 2 disordered regions span residues 1 to 23 and 40 to 67; these read MISVMQQMINNDSPEDSKESITS and SIQGESRSERESETGSSPQLAPSSTGMV. A DNA-binding region (homeobox) is located at residues 162–221; sequence GKKKRQPYKKDQISRLEYEYSVNQYLTNKRRSELSAQLMLDEKQVKVWFQNRRMKDKKLR.

The protein belongs to the abd-b homeobox family. In terms of assembly, interacts with nuclear receptor nhr-25. Interacts with geminin homolog gmn-1. Interacts with homeodomain protein ceh-20.

The protein localises to the nucleus. Transcription factor, involved in posterior embryonic patterning, morphogenetic movements of the posterior hypodermis, and cell fate specification. Binds to the 5'-TAGT-3' motif in regulatory elements of genes, including Meis protein psa-3 and microRNA mir-57. Involved in a negative regulatory loop with mir-57 to specify posterior cell identities. Required for asymmetric division of the T hypodermal cell, acting via the regulation of asymmetric expression of psa-3 in cooperation with ceh-20 and the Wnt-MAPK pathway. Involved in the regulation of the onset of non-apoptotic cell death in the linker cell, acting together with the Wnt signaling pathway. Involved in promoting embryogenesis, in concert with orphan nuclear receptor nhr-25. May regulate expression of transcription factor dmd-3. The chain is Homeobox protein nob-1 from Caenorhabditis elegans.